A 348-amino-acid polypeptide reads, in one-letter code: tRNA N6-adenosine threonylcarbamoyltransferase (348 aa).

Residues His-111 and His-115 each contribute to the Fe cation site. Residues 134–138 (LVSGG), Asp-167, Gly-180, Asp-184, and Asn-280 contribute to the substrate site. Asp-308 is a Fe cation binding site.

The protein belongs to the KAE1 / TsaD family. The cofactor is Fe(2+).

Its subcellular location is the cytoplasm. It carries out the reaction L-threonylcarbamoyladenylate + adenosine(37) in tRNA = N(6)-L-threonylcarbamoyladenosine(37) in tRNA + AMP + H(+). Its function is as follows. Required for the formation of a threonylcarbamoyl group on adenosine at position 37 (t(6)A37) in tRNAs that read codons beginning with adenine. Is involved in the transfer of the threonylcarbamoyl moiety of threonylcarbamoyl-AMP (TC-AMP) to the N6 group of A37, together with TsaE and TsaB. TsaD likely plays a direct catalytic role in this reaction. The chain is tRNA N6-adenosine threonylcarbamoyltransferase from Rippkaea orientalis (strain PCC 8801 / RF-1) (Cyanothece sp. (strain PCC 8801)).